Consider the following 492-residue polypeptide: MTDLHRLSIRELAEGLSQAKFSSRELTEHYLKRIAKIDPQVKSYVTVTPEQALREADAADAALKAGNATALTGIPLAHKDIFCTKGIKTTAGSKMLDNFISPYDATVVEKTKAAGLVTLGKVNMDEFAMGSTSESSYVGATSNPWALDHVPGGSSGGSAAAVAADLAPFATGTDTGGSIRQPASFCGLTGLKPTYGRVSRFGIIAYASSLDQAGPMARSAEDCAYLMNVIAGHDAKDSTSVKKEVDDYVANLNNTSVKGLRIGIPKQYFNVAGLDADVKARVEESLKKLEEMGAALVEIDLNMTEAYVPTYYLIAPAEASSNLSRYDGVRYGYRCENPADLMDLYKRSRSEGFGPEVQRRILIGTYALSAGYYDAYYVKAQKVRRLIQQDFLKAFENVDVIAAPAAPTTAYKIGASLDPVEMYLGDIYTIAVNLAGLPAINAPVGFDKDNLPVGLQLIGNYWSESQLLSIVHQYQQNTDWHTKRAAIAEENA.

Active-site charge relay system residues include K79 and S154. The Acyl-ester intermediate role is filled by S178.

The protein belongs to the amidase family. GatA subfamily. As to quaternary structure, heterotrimer of A, B and C subunits.

It carries out the reaction L-glutamyl-tRNA(Gln) + L-glutamine + ATP + H2O = L-glutaminyl-tRNA(Gln) + L-glutamate + ADP + phosphate + H(+). Allows the formation of correctly charged Gln-tRNA(Gln) through the transamidation of misacylated Glu-tRNA(Gln) in organisms which lack glutaminyl-tRNA synthetase. The reaction takes place in the presence of glutamine and ATP through an activated gamma-phospho-Glu-tRNA(Gln). In Acinetobacter baumannii (strain ACICU), this protein is Glutamyl-tRNA(Gln) amidotransferase subunit A.